The chain runs to 480 residues: Proline--tRNA ligase (480 aa).

It belongs to the class-II aminoacyl-tRNA synthetase family. ProS type 3 subfamily. In terms of assembly, homodimer.

The protein localises to the cytoplasm. It carries out the reaction tRNA(Pro) + L-proline + ATP = L-prolyl-tRNA(Pro) + AMP + diphosphate. In terms of biological role, catalyzes the attachment of proline to tRNA(Pro) in a two-step reaction: proline is first activated by ATP to form Pro-AMP and then transferred to the acceptor end of tRNA(Pro). In Chloroflexus aggregans (strain MD-66 / DSM 9485), this protein is Proline--tRNA ligase.